The sequence spans 318 residues: MIVTFLGTGSGAPTTRRNVSGIGLRFLQAGKWWLFDCGEGTQHQLLRAPMKISQLDKIFITHLHGDHLYGLIGLLASRSLRNTEPTPLELYGPPGLDRYFRGIMEASPVHLQYPLEIKIVSEGVIYEDEEIVVSCRMAKHRVPSFAYAVMEKEKTGAFQVERAKQAGVPSGPLFGALKRGEQVTLEDGRVLDGKDFVGEPQPGRKIVFSGDTEPSQAVLELAKGADLLVHEATYAHHDKELATRSGHSTAREAAQIAKEAGVKELCLTHFSPRYEDEDGDFSMEDLLAEAQQIFPATQLADDLGSISVKRERSDGRKP.

Residues H62, H64, D66, H67, H140, D211, and H269 each contribute to the Zn(2+) site. D66 acts as the Proton acceptor in catalysis.

It belongs to the RNase Z family. As to quaternary structure, homodimer. Zn(2+) serves as cofactor.

It catalyses the reaction Endonucleolytic cleavage of RNA, removing extra 3' nucleotides from tRNA precursor, generating 3' termini of tRNAs. A 3'-hydroxy group is left at the tRNA terminus and a 5'-phosphoryl group is left at the trailer molecule.. Functionally, zinc phosphodiesterase, which displays some tRNA 3'-processing endonuclease activity. Probably involved in tRNA maturation, by removing a 3'-trailer from precursor tRNA. The sequence is that of Ribonuclease Z from Brevibacillus brevis (strain 47 / JCM 6285 / NBRC 100599).